A 420-amino-acid polypeptide reads, in one-letter code: Pectate lyase (420 aa).

The first 21 residues, 1–21 (MKKVMLATALFLGLTPAGANA), serve as a signal peptide directing secretion. The tract at residues 117-139 (TWGKKEPSGTQEEARARSQKNQK) is disordered. Over residues 119 to 132 (GKKEPSGTQEEARA) the composition is skewed to basic and acidic residues. 3 residues coordinate Ca(2+): Asp205, Asp244, and Asp248. Arg300 is a catalytic residue.

This sequence belongs to the polysaccharide lyase 1 family. As to quaternary structure, monomer. The cofactor is Ca(2+).

It localises to the secreted. It carries out the reaction Eliminative cleavage of (1-&gt;4)-alpha-D-galacturonan to give oligosaccharides with 4-deoxy-alpha-D-galact-4-enuronosyl groups at their non-reducing ends.. It functions in the pathway glycan metabolism; pectin degradation; 2-dehydro-3-deoxy-D-gluconate from pectin: step 2/5. Functionally, produces unsaturated products from polygalacturonate. In Bacillus subtilis (strain 168), this protein is Pectate lyase (pel).